A 591-amino-acid chain; its full sequence is tRNA 5-methylaminomethyl-2-thiouridine biosynthesis bifunctional protein MnmC (591 aa).

Residues M1–P232 form a tRNA (mnm(5)s(2)U34)-methyltransferase region. The interval I247–L591 is FAD-dependent cmnm(5)s(2)U34 oxidoreductase.

It in the N-terminal section; belongs to the methyltransferase superfamily. tRNA (mnm(5)s(2)U34)-methyltransferase family. The protein in the C-terminal section; belongs to the DAO family. It depends on FAD as a cofactor.

It is found in the cytoplasm. The catalysed reaction is 5-aminomethyl-2-thiouridine(34) in tRNA + S-adenosyl-L-methionine = 5-methylaminomethyl-2-thiouridine(34) in tRNA + S-adenosyl-L-homocysteine + H(+). In terms of biological role, catalyzes the last two steps in the biosynthesis of 5-methylaminomethyl-2-thiouridine (mnm(5)s(2)U) at the wobble position (U34) in tRNA. Catalyzes the FAD-dependent demodification of cmnm(5)s(2)U34 to nm(5)s(2)U34, followed by the transfer of a methyl group from S-adenosyl-L-methionine to nm(5)s(2)U34, to form mnm(5)s(2)U34. The protein is tRNA 5-methylaminomethyl-2-thiouridine biosynthesis bifunctional protein MnmC of Caulobacter vibrioides (strain ATCC 19089 / CIP 103742 / CB 15) (Caulobacter crescentus).